Reading from the N-terminus, the 707-residue chain is Toxin RTX-I translocation ATP-binding protein (707 aa).

In terms of domain architecture, Peptidase C39 spans 1–125 (MDFYREEDYG…SLYQGKLILV (125 aa)). His-83 is a catalytic residue. One can recognise an ABC transmembrane type-1 domain in the interval 154–436 (FIETLIVSIF…LAQLWQDFQQ (283 aa)). 5 helical membrane-spanning segments follow: residues 158–178 (LIVS…FQVV), 188–208 (FSTL…EIVL), 295–315 (LVIL…SPIL), 387–407 (VVMV…DLSI), and 410–430 (LIAF…LAQL). One can recognise an ABC transporter domain in the interval 468-703 (ITFRNIRFRY…PNGLYHYLHQ (236 aa)). Residue 502–509 (GRSGSGKS) coordinates ATP.

The protein belongs to the ABC transporter superfamily. Protein-1 exporter (TC 3.A.1.109) family. In terms of assembly, homodimer.

The protein localises to the cell membrane. Its function is as follows. Involved in the transport of the toxin RTX-I as well as that of RTX-II. The chain is Toxin RTX-I translocation ATP-binding protein (apxIB) from Actinobacillus pleuropneumoniae (Haemophilus pleuropneumoniae).